A 275-amino-acid chain; its full sequence is Putative pyruvate, phosphate dikinase regulatory protein (275 aa).

151–158 (GVSRTSKT) is a binding site for ADP.

This sequence belongs to the pyruvate, phosphate/water dikinase regulatory protein family. PDRP subfamily.

It carries out the reaction N(tele)-phospho-L-histidyl/L-threonyl-[pyruvate, phosphate dikinase] + ADP = N(tele)-phospho-L-histidyl/O-phospho-L-threonyl-[pyruvate, phosphate dikinase] + AMP + H(+). The enzyme catalyses N(tele)-phospho-L-histidyl/O-phospho-L-threonyl-[pyruvate, phosphate dikinase] + phosphate + H(+) = N(tele)-phospho-L-histidyl/L-threonyl-[pyruvate, phosphate dikinase] + diphosphate. In terms of biological role, bifunctional serine/threonine kinase and phosphorylase involved in the regulation of the pyruvate, phosphate dikinase (PPDK) by catalyzing its phosphorylation/dephosphorylation. The polypeptide is Putative pyruvate, phosphate dikinase regulatory protein (Rhodospirillum rubrum (strain ATCC 11170 / ATH 1.1.1 / DSM 467 / LMG 4362 / NCIMB 8255 / S1)).